Consider the following 285-residue polypeptide: Acetyl-coenzyme A carboxylase carboxyl transferase subunit beta (285 aa).

In terms of domain architecture, CoA carboxyltransferase N-terminal spans 23 to 285 (VFRRCDGCSH…HLTAGRRARR (263 aa)). Residues Cys-27, Cys-30, Cys-46, and Cys-49 each contribute to the Zn(2+) site. The C4-type zinc finger occupies 27-49 (CDGCSHTHDAAELARTFEVCSQC).

Belongs to the AccD/PCCB family. Acetyl-CoA carboxylase is a heterohexamer composed of biotin carboxyl carrier protein (AccB), biotin carboxylase (AccC) and two subunits each of ACCase subunit alpha (AccA) and ACCase subunit beta (AccD). Zn(2+) serves as cofactor.

It is found in the cytoplasm. It catalyses the reaction N(6)-carboxybiotinyl-L-lysyl-[protein] + acetyl-CoA = N(6)-biotinyl-L-lysyl-[protein] + malonyl-CoA. The protein operates within lipid metabolism; malonyl-CoA biosynthesis; malonyl-CoA from acetyl-CoA: step 1/1. Its function is as follows. Component of the acetyl coenzyme A carboxylase (ACC) complex. Biotin carboxylase (BC) catalyzes the carboxylation of biotin on its carrier protein (BCCP) and then the CO(2) group is transferred by the transcarboxylase to acetyl-CoA to form malonyl-CoA. The sequence is that of Acetyl-coenzyme A carboxylase carboxyl transferase subunit beta from Sorangium cellulosum (strain So ce56) (Polyangium cellulosum (strain So ce56)).